A 75-amino-acid polypeptide reads, in one-letter code: MPRPKPDDRSDNVEKLQDMVQNTIENIEKAEETMQFASPEERERIREKNRRREEAIAAMRAEIKDEAAAREHGYQ.

Belongs to the Tlp family.

It localises to the spore core. The polypeptide is Small, acid-soluble spore protein Tlp (Geobacillus thermodenitrificans (strain NG80-2)).